Reading from the N-terminus, the 176-residue chain is Probable fimbrial subunit LpfE (176 aa).

The signal sequence occupies residues 1 to 23 (MKFKRLLHSGIASLSLVACGVNA).

This sequence belongs to the fimbrial protein family.

The protein resides in the fimbrium. Functionally, part of the lpfABCC'DE fimbrial operon. LP fimbriae may participate in the interaction with eukaryotic cells by assisting in microcolony formation. This Escherichia coli O157:H7 protein is Probable fimbrial subunit LpfE (lpfE).